The chain runs to 167 residues: Lipoprotein signal peptidase (167 aa).

3 helical membrane passes run 12–32 (WLWLAVLAFVLDQASKLAVVK), 68–88 (WQRWFFAVLAFAICGLLIHWL), and 99–119 (GIAYSLIIGGALGNVFDRLVL). Catalysis depends on residues aspartate 124 and aspartate 142. A helical membrane pass occupies residues 137-157 (AFNLADSFIFIGAAMIVLDGF).

It belongs to the peptidase A8 family.

The protein resides in the cell inner membrane. It catalyses the reaction Release of signal peptides from bacterial membrane prolipoproteins. Hydrolyzes -Xaa-Yaa-Zaa-|-(S,diacylglyceryl)Cys-, in which Xaa is hydrophobic (preferably Leu), and Yaa (Ala or Ser) and Zaa (Gly or Ala) have small, neutral side chains.. Its pathway is protein modification; lipoprotein biosynthesis (signal peptide cleavage). In terms of biological role, this protein specifically catalyzes the removal of signal peptides from prolipoproteins. This chain is Lipoprotein signal peptidase, found in Aeromonas hydrophila subsp. hydrophila (strain ATCC 7966 / DSM 30187 / BCRC 13018 / CCUG 14551 / JCM 1027 / KCTC 2358 / NCIMB 9240 / NCTC 8049).